A 269-amino-acid chain; its full sequence is Formamidopyrimidine-DNA glycosylase (269 aa).

P2 serves as the catalytic Schiff-base intermediate with DNA. Residue E3 is the Proton donor of the active site. The active-site Proton donor; for beta-elimination activity is the K57. Residues H90, R109, and K150 each contribute to the DNA site. The FPG-type zinc-finger motif lies at 235-269 (QVYGKGGKPCPRCDNPLSEMKIGQRASVFCSECQK). R259 serves as the catalytic Proton donor; for delta-elimination activity.

This sequence belongs to the FPG family. In terms of assembly, monomer. The cofactor is Zn(2+).

The enzyme catalyses Hydrolysis of DNA containing ring-opened 7-methylguanine residues, releasing 2,6-diamino-4-hydroxy-5-(N-methyl)formamidopyrimidine.. The catalysed reaction is 2'-deoxyribonucleotide-(2'-deoxyribose 5'-phosphate)-2'-deoxyribonucleotide-DNA = a 3'-end 2'-deoxyribonucleotide-(2,3-dehydro-2,3-deoxyribose 5'-phosphate)-DNA + a 5'-end 5'-phospho-2'-deoxyribonucleoside-DNA + H(+). In terms of biological role, involved in base excision repair of DNA damaged by oxidation or by mutagenic agents. Acts as a DNA glycosylase that recognizes and removes damaged bases. Has a preference for oxidized purines, such as 7,8-dihydro-8-oxoguanine (8-oxoG). Has AP (apurinic/apyrimidinic) lyase activity and introduces nicks in the DNA strand. Cleaves the DNA backbone by beta-delta elimination to generate a single-strand break at the site of the removed base with both 3'- and 5'-phosphates. This Photobacterium profundum (strain SS9) protein is Formamidopyrimidine-DNA glycosylase.